The chain runs to 149 residues: Large ribosomal subunit protein bL9 (149 aa).

This sequence belongs to the bacterial ribosomal protein bL9 family.

Binds to the 23S rRNA. The chain is Large ribosomal subunit protein bL9 from Salmonella agona (strain SL483).